Consider the following 451-residue polypeptide: Probable glycine dehydrogenase (decarboxylating) subunit 1 (451 aa).

This sequence belongs to the GcvP family. N-terminal subunit subfamily. In terms of assembly, the glycine cleavage system is composed of four proteins: P, T, L and H. In this organism, the P 'protein' is a heterodimer of two subunits.

It catalyses the reaction N(6)-[(R)-lipoyl]-L-lysyl-[glycine-cleavage complex H protein] + glycine + H(+) = N(6)-[(R)-S(8)-aminomethyldihydrolipoyl]-L-lysyl-[glycine-cleavage complex H protein] + CO2. In terms of biological role, the glycine cleavage system catalyzes the degradation of glycine. The P protein binds the alpha-amino group of glycine through its pyridoxal phosphate cofactor; CO(2) is released and the remaining methylamine moiety is then transferred to the lipoamide cofactor of the H protein. This Thioalkalivibrio sulfidiphilus (strain HL-EbGR7) protein is Probable glycine dehydrogenase (decarboxylating) subunit 1.